A 101-amino-acid polypeptide reads, in one-letter code: Parathymosin (101 aa).

The segment at 1 to 101 (MSEKSVEAAA…RQKTENGASA (101 aa)) is disordered. Residue Ser2 is modified to N-acetylserine. Ser2 is modified (phosphoserine). Lys4 is subject to N6-acetyllysine. Phosphoserine is present on residues Ser5 and Ser13. Positions 13-37 (SAKDLKEKKDKVEEKAGRKERKKEV) are enriched in basic and acidic residues. Lys15 is subject to N6-acetyllysine. Over residues 38–74 (VEEEENGAEEEEEETAEDGEDDDEGDEEDEEEEEEDE) the composition is skewed to acidic residues. Thr52 is subject to Phosphothreonine. Position 91 is an N6-acetyllysine (Lys91).

This sequence belongs to the pro/parathymosin family.

Parathymosin may mediate immune function by blocking the effect of prothymosin alpha which confers resistance to certain opportunistic infections. This chain is Parathymosin (Ptms), found in Mus musculus (Mouse).